A 213-amino-acid polypeptide reads, in one-letter code: Probable nicotinate-nucleotide adenylyltransferase (213 aa).

This sequence belongs to the NadD family.

The enzyme catalyses nicotinate beta-D-ribonucleotide + ATP + H(+) = deamido-NAD(+) + diphosphate. It participates in cofactor biosynthesis; NAD(+) biosynthesis; deamido-NAD(+) from nicotinate D-ribonucleotide: step 1/1. Catalyzes the reversible adenylation of nicotinate mononucleotide (NaMN) to nicotinic acid adenine dinucleotide (NaAD). This is Probable nicotinate-nucleotide adenylyltransferase from Shigella boydii serotype 18 (strain CDC 3083-94 / BS512).